The sequence spans 447 residues: Signal recognition particle 54 kDa protein (447 aa).

GTP-binding positions include 103 to 110 (GVQGSGKT), 185 to 189 (DTAGR), and 245 to 248 (TKMD).

Belongs to the GTP-binding SRP family. SRP54 subfamily. In terms of assembly, part of the signal recognition particle protein translocation system, which is composed of SRP and FtsY. Archaeal SRP consists of a 7S RNA molecule of 300 nucleotides and two protein subunits: SRP54 and SRP19.

Its subcellular location is the cytoplasm. The enzyme catalyses GTP + H2O = GDP + phosphate + H(+). Functionally, involved in targeting and insertion of nascent membrane proteins into the cytoplasmic membrane. Binds to the hydrophobic signal sequence of the ribosome-nascent chain (RNC) as it emerges from the ribosomes. The SRP-RNC complex is then targeted to the cytoplasmic membrane where it interacts with the SRP receptor FtsY. This is Signal recognition particle 54 kDa protein from Saccharolobus islandicus (strain Y.N.15.51 / Yellowstone #2) (Sulfolobus islandicus).